The sequence spans 104 residues: Large ribosomal subunit protein uL24 (104 aa).

The protein belongs to the universal ribosomal protein uL24 family. As to quaternary structure, part of the 50S ribosomal subunit.

Its function is as follows. One of two assembly initiator proteins, it binds directly to the 5'-end of the 23S rRNA, where it nucleates assembly of the 50S subunit. In terms of biological role, one of the proteins that surrounds the polypeptide exit tunnel on the outside of the subunit. The polypeptide is Large ribosomal subunit protein uL24 (Corynebacterium kroppenstedtii (strain DSM 44385 / JCM 11950 / CIP 105744 / CCUG 35717)).